A 584-amino-acid polypeptide reads, in one-letter code: Arginine--tRNA ligase (584 aa).

A 'HIGH' region motif is present at residues 130–140 (PNVAKEMHVGH).

The protein belongs to the class-I aminoacyl-tRNA synthetase family. Monomer.

Its subcellular location is the cytoplasm. The enzyme catalyses tRNA(Arg) + L-arginine + ATP = L-arginyl-tRNA(Arg) + AMP + diphosphate. This is Arginine--tRNA ligase from Protochlamydia amoebophila (strain UWE25).